A 371-amino-acid chain; its full sequence is Gustatory and pheromone receptor 39a, isoform A (371 aa).

The Cytoplasmic portion of the chain corresponds to 1–41 (MSKVCRDLRIYLRLLHIMGMMCWHFDSDHCQLVATSGSERY). Residues 42–62 (AVVYAGCILVSTTAGFIFALL) traverse the membrane as a helical segment. The Extracellular portion of the chain corresponds to 63 to 80 (HPSRFHIAIYNQTGNFYE). N-linked (GlcNAc...) asparagine glycosylation occurs at N73. Residues 81 to 101 (AVIFRSTCVVLFLVYVILYAW) traverse the membrane as a helical segment. Residues 102 to 127 (RHRYRDLVQHILRLNRRCASSCTNQQ) lie on the Cytoplasmic side of the membrane. Residues 128–148 (FLHNIILYGMLTILCFGNYLH) form a helical membrane-spanning segment. The Extracellular segment spans residues 149-161 (GYTRAGLATLPLA). Residues 162–182 (LCMLVYIFAFLVLCLLLMFFV) form a helical membrane-spanning segment. The Cytoplasmic segment spans residues 183-228 (SLKQVMTAGLIHYNQQLCQGDLISGLRGRQQILKLCGGELNECFGL). A helical transmembrane segment spans residues 229 to 249 (LMLPIVALVLLMAPSGPFFLI). The Extracellular portion of the chain corresponds to 250-263 (STVLEGKFRPDECL). A helical membrane pass occupies residues 264–284 (IMLLTSSTWDTPWMIMLVLML). Over 285-340 (RTNGISEEANKTAKMLTKVPRTGTGLDRMIEKFLLKNLRQKPILTAYGFFALDKST) the chain is Cytoplasmic. The helical transmembrane segment at 341-361 (LFKLFTAIFTYMVILVQFKEM) threads the bilayer. Topologically, residues 362–371 (ENSTKSINKF) are extracellular. N-linked (GlcNAc...) asparagine glycosylation occurs at N363.

Belongs to the insect chemoreceptor superfamily. Gustatory receptor (GR) family. Gr21a subfamily. Expressed in the adult labellar chemosensory neurons, and adult thorax and wing. In larvae, is expressed in neurons of the posterior pharyngeal sense organ.

It is found in the cell membrane. Functionally, gustatory receptor which mediates acceptance or avoidance behavior, depending on its substrates. Plays a role in sustaining courtship behavior in males, possibly through the reception of a stimulating arrestant pheromone. This is Gustatory and pheromone receptor 39a, isoform A (Gr39a) from Drosophila melanogaster (Fruit fly).